An 83-amino-acid chain; its full sequence is Glutaredoxin 3 (83 aa).

One can recognise a Glutaredoxin domain in the interval 2-83 (ANVEIYTKET…ARGGLDPLLK (82 aa)). A disulfide bridge connects residues Cys12 and Cys15.

It belongs to the glutaredoxin family. In terms of assembly, monomer.

The disulfide bond functions as an electron carrier in the glutathione-dependent synthesis of deoxyribonucleotides by the enzyme ribonucleotide reductase. In addition, it is also involved in reducing some disulfides in a coupled system with glutathione reductase. The protein is Glutaredoxin 3 (grxC) of Escherichia coli O157:H7.